The following is a 491-amino-acid chain: Tyrosine 3-monooxygenase (491 aa).

A Phosphoserine; by CaMK2 modification is found at serine 19. Serine 31 is subject to Phosphoserine. Serine 40 bears the Phosphoserine; by CaMK2 and PKA mark. Fe cation is bound by residues histidine 324, histidine 329, and glutamate 369. Position 465 is a phosphoserine (serine 465).

Belongs to the biopterin-dependent aromatic amino acid hydroxylase family. Homotetramer. Interacts (when phosphorylated at Ser-19) with YWHAG; one YWHAG dimer bounds to one TH tetramer and this interaction may influence the phosphorylation and dephosphorylation of other sites. Interacts with NT5DC2; the interaction results in reduced phosphorylation and decreased catalytic activity of TH. The cofactor is Fe(2+). In terms of processing, phosphorylated on Ser-19, Ser-31 and Ser-40 by several protein kinases with different site specificities. Phosphorylation at Ser-31 and Ser-40 leads to an increase of TH activity. Phosphorylation at Ser-40 activates the enzyme and also counteracts the feedback inhibition of TH by catecholamines. Phosphorylation of Ser-19 and Ser-31 triggers the proteasomal degradation of TH through the ubiquitin-proteasome pathway. Phosphorylation at Ser-31 facilitates transport of TH from the soma to the nerve terminals via the microtubule network. Phosphorylation at Ser-19 induces the high-affinity binding to the 14-3-3 protein YWHAG; this interaction may influence the phosphorylation and dephosphorylation of other sites. Ser-19 increases the phosphorylation at Ser-40 in a hierarchical manner, leading to increased activity.

Its subcellular location is the cytoplasm. The protein localises to the perinuclear region. It is found in the nucleus. The protein resides in the cell projection. It localises to the axon. Its subcellular location is the cytoplasmic vesicle. The protein localises to the secretory vesicle. It is found in the synaptic vesicle. It catalyses the reaction (6R)-L-erythro-5,6,7,8-tetrahydrobiopterin + L-tyrosine + O2 = (4aS,6R)-4a-hydroxy-L-erythro-5,6,7,8-tetrahydrobiopterin + L-dopa. Its pathway is catecholamine biosynthesis; dopamine biosynthesis; dopamine from L-tyrosine: step 1/2. Inhibited in feedback fashion by the catecholamine neurotransmitters, especially by dopamine in competition with tetrahydrobiopterin. Phosphorylation of several Ser/Thr residues in the N-terminus regulates the catalytic activity. Ser-31 and Ser-40 are readily phosphorylated to activate the catalytic activity. A Cysteine modification induced by N-ethylmaleimide (NEM), inhibits tyrosine 3-monooxygenase activity through the modification of the Cys-170. Functionally, catalyzes the conversion of L-tyrosine to L-dihydroxyphenylalanine (L-Dopa), the rate-limiting step in the biosynthesis of catecholamines, dopamine, noradrenaline, and adrenaline. Uses tetrahydrobiopterin and molecular oxygen to convert tyrosine to L-Dopa. In addition to tyrosine, is able to catalyze the hydroxylation of phenylalanine and tryptophan with lower specificity. Positively regulates the regression of retinal hyaloid vessels during postnatal development. The chain is Tyrosine 3-monooxygenase (TH) from Bos taurus (Bovine).